A 98-amino-acid chain; its full sequence is DNA/RNA-binding protein Alba (98 aa).

Lysine 16 carries the post-translational modification N6-acetyllysine.

It belongs to the histone-like Alba family. Post-translationally, acetylated. Acetylation at Lys-16 decreases DNA-binding affinity.

The protein localises to the cytoplasm. Its subcellular location is the chromosome. Its function is as follows. Binds double-stranded DNA tightly but without sequence specificity. Involved in DNA compaction. This Metallosphaera sedula (strain ATCC 51363 / DSM 5348 / JCM 9185 / NBRC 15509 / TH2) protein is DNA/RNA-binding protein Alba.